The primary structure comprises 150 residues: Large ribosomal subunit protein uL15 (150 aa).

The disordered stretch occupies residues 1-57 (MTLRLESLKPNKGARRRKLRKGRGIAAGQGASCGFGMRGQKSRSGRPTRPGFEGGQM). Basic residues predominate over residues 12–23 (KGARRRKLRKGR). Over residues 25–37 (IAAGQGASCGFGM) the composition is skewed to gly residues.

The protein belongs to the universal ribosomal protein uL15 family. Part of the 50S ribosomal subunit.

Its function is as follows. Binds to the 23S rRNA. In Synechococcus sp. (strain CC9311), this protein is Large ribosomal subunit protein uL15.